Here is a 195-residue protein sequence, read N- to C-terminus: Interferon tau-11 (195 aa).

Positions 1 to 23 (MAFVLSLLMALVLVSYGPGGSLG) are cleaved as a signal peptide. Intrachain disulfides connect cysteine 24–cysteine 122 and cysteine 52–cysteine 162. N-linked (GlcNAc...) asparagine glycosylation is present at asparagine 101.

This sequence belongs to the alpha/beta interferon family. IFN-alphaII subfamily. In terms of tissue distribution, constitutively and exclusively expressed in the mononuclear cells of the extraembryonic trophectoderm.

It localises to the secreted. Its function is as follows. Paracrine hormone primarily responsible for maternal recognition of pregnancy. Interacts with endometrial receptors, probably type I interferon receptors, and blocks estrogen receptor expression, preventing the estrogen-induced increase in oxytocin receptor expression in the endometrium. This results in the suppression of the pulsatile endometrial release of the luteolytic hormone prostaglandin F2-alpha, hindering the regression of the corpus luteum (luteolysis) and therefore a return to ovarian cyclicity. This, and a possible direct effect of IFN-tau on prostaglandin synthesis, leads in turn to continued ovarian progesterone secretion, which stimulates the secretion by the endometrium of the nutrients required for the growth of the conceptus. In summary, displays particularly high antiviral and antiproliferative potency concurrently with particular weak cytotoxicity, high antiluteolytic activity and immunomodulatory properties. In contrast with other IFNs, IFN-tau is not virally inducible. This chain is Interferon tau-11 (IFNT11), found in Ovis aries (Sheep).